Here is a 163-residue protein sequence, read N- to C-terminus: Thiol peroxidase (163 aa).

Residues 16-162 (LQVGDKALDF…FEAAIAAAKA (147 aa)) enclose the Thioredoxin domain. C58 (cysteine sulfenic acid (-SOH) intermediate) is an active-site residue. The cysteines at positions 58 and 92 are disulfide-linked.

It belongs to the peroxiredoxin family. Tpx subfamily. In terms of assembly, homodimer.

It catalyses the reaction a hydroperoxide + [thioredoxin]-dithiol = an alcohol + [thioredoxin]-disulfide + H2O. In terms of biological role, thiol-specific peroxidase that catalyzes the reduction of hydrogen peroxide and organic hydroperoxides to water and alcohols, respectively. Plays a role in cell protection against oxidative stress by detoxifying peroxides. In Streptococcus pneumoniae serotype 2 (strain D39 / NCTC 7466), this protein is Thiol peroxidase.